The chain runs to 433 residues: 3-phosphoshikimate 1-carboxyvinyltransferase (433 aa).

Residues lysine 22, serine 23, and arginine 27 each contribute to the 3-phosphoshikimate site. Lysine 22 contributes to the phosphoenolpyruvate binding site. Positions 95 and 123 each coordinate phosphoenolpyruvate. Positions 167, 169, 315, and 342 each coordinate 3-phosphoshikimate. A phosphoenolpyruvate-binding site is contributed by glutamine 169. Catalysis depends on aspartate 315, which acts as the Proton acceptor. Phosphoenolpyruvate-binding residues include arginine 346 and arginine 387.

It belongs to the EPSP synthase family. As to quaternary structure, monomer.

It localises to the cytoplasm. It catalyses the reaction 3-phosphoshikimate + phosphoenolpyruvate = 5-O-(1-carboxyvinyl)-3-phosphoshikimate + phosphate. Its pathway is metabolic intermediate biosynthesis; chorismate biosynthesis; chorismate from D-erythrose 4-phosphate and phosphoenolpyruvate: step 6/7. Functionally, catalyzes the transfer of the enolpyruvyl moiety of phosphoenolpyruvate (PEP) to the 5-hydroxyl of shikimate-3-phosphate (S3P) to produce enolpyruvyl shikimate-3-phosphate and inorganic phosphate. The sequence is that of 3-phosphoshikimate 1-carboxyvinyltransferase from Legionella pneumophila (strain Paris).